We begin with the raw amino-acid sequence, 1002 residues long: Collagen alpha-2(I) chain (1002 aa).

Residues Ser1–Ser1002 form a disordered region. 4-hydroxyproline is present on residues Pro10, Pro13, Pro28, and Pro34. A compositionally biased stretch (low complexity) spans Gly17–Pro60. Lys89 is modified (5-hydroxylysine; alternate). A glycan (O-linked (Gal...) hydroxylysine; alternate) is linked at Lys89. Composition is skewed to low complexity over residues Ser145–Pro166 and Pro211–Pro232. Over residues Gly266–Gly275 the composition is skewed to gly residues. Positions Ser276–Ser286 are enriched in low complexity. Residues Gly308–Gly317 show a composition bias toward gly residues. Residues Pro330 to Ser346 show a composition bias toward low complexity. 2 positions are modified to 4-hydroxyproline: Pro352 and Pro355. Residues Leu381–Ala400 are compositionally biased toward low complexity. Over residues Gly449–Gly458 the composition is skewed to gly residues. Low complexity-rich tracts occupy residues Pro505–Pro522 and Glu534–Ala544. Over residues Gly545–Gly554 the composition is skewed to gly residues. Composition is skewed to low complexity over residues Val577–Ser621 and Val628–Ala648. Over residues Lys649–Lys658 the composition is skewed to basic and acidic residues. The segment covering Pro666–Ala676 has biased composition (low complexity). A compositionally biased stretch (gly residues) spans Gly686–Gly695. Residues Thr697 to Thr706 are compositionally biased toward low complexity. Residues Gly743 to Gly752 are compositionally biased toward gly residues. 2 stretches are compositionally biased toward low complexity: residues Ser760–Pro787 and Leu795–Pro805. The segment covering Gly806–Gly828 has biased composition (gly residues). Residues Ala833–Arg851 show a composition bias toward basic and acidic residues. Positions Tyr853 to Pro898 are enriched in low complexity. The segment covering Arg908–Pro919 has biased composition (basic and acidic residues). Over residues Ser987–Ser1002 the composition is skewed to pro residues.

This sequence belongs to the fibrillar collagen family. As to quaternary structure, trimers of one alpha 2(I) and two alpha 1(I) chains. Interacts (via C-terminus) with TMEM131 (via PapD-L domain); the interaction is direct and is involved in assembly and TRAPPIII ER-to-Golgi transport complex-dependent secretion of collagen. Prolines at the third position of the tripeptide repeating unit (G-X-Y) are hydroxylated in some or all of the chains. Expressed in bones.

It is found in the secreted. The protein localises to the extracellular space. Its subcellular location is the extracellular matrix. Type I collagen is a member of group I collagen (fibrillar forming collagen). This is Collagen alpha-2(I) chain from Glossotherium robustum (Ground sloth).